The sequence spans 145 residues: Large ribosomal subunit protein uL16 (145 aa).

Belongs to the universal ribosomal protein uL16 family. In terms of assembly, part of the 50S ribosomal subunit.

In terms of biological role, binds 23S rRNA and is also seen to make contacts with the A and possibly P site tRNAs. The chain is Large ribosomal subunit protein uL16 from Herpetosiphon aurantiacus (strain ATCC 23779 / DSM 785 / 114-95).